The chain runs to 158 residues: 6,7-dimethyl-8-ribityllumazine synthase (158 aa).

Residues Phe-22, 57-59 (AVE), and 81-83 (AVI) contribute to the 5-amino-6-(D-ribitylamino)uracil site. Residue 86 to 87 (GT) coordinates (2S)-2-hydroxy-3-oxobutyl phosphate. His-89 acts as the Proton donor in catalysis. Phe-114 serves as a coordination point for 5-amino-6-(D-ribitylamino)uracil. Position 128 (Arg-128) interacts with (2S)-2-hydroxy-3-oxobutyl phosphate.

Belongs to the DMRL synthase family. In terms of assembly, forms an icosahedral capsid composed of 60 subunits, arranged as a dodecamer of pentamers.

It catalyses the reaction (2S)-2-hydroxy-3-oxobutyl phosphate + 5-amino-6-(D-ribitylamino)uracil = 6,7-dimethyl-8-(1-D-ribityl)lumazine + phosphate + 2 H2O + H(+). Its pathway is cofactor biosynthesis; riboflavin biosynthesis; riboflavin from 2-hydroxy-3-oxobutyl phosphate and 5-amino-6-(D-ribitylamino)uracil: step 1/2. Catalyzes the formation of 6,7-dimethyl-8-ribityllumazine by condensation of 5-amino-6-(D-ribitylamino)uracil with 3,4-dihydroxy-2-butanone 4-phosphate. This is the penultimate step in the biosynthesis of riboflavin. This Shewanella halifaxensis (strain HAW-EB4) protein is 6,7-dimethyl-8-ribityllumazine synthase.